The chain runs to 207 residues: MALHTVLIILSLLPMLEAQNPEHANFTIGEPITNETLSWLSDKWFFMGAAFRKLEYRQAIQTMQSEFFYLTTNLINDTIELRESQTIGDQCVYNSTHLGFQRENGTFSKYEGGVETFAHLIVLRKHGAFMLAFDLKDEKKRGLSLYAKRPDITPELREVFQKAVTHVGMDESEIIFVDWKKDRCGQQEKKQLELGKETKKDPEEGQA.

Residues 1 to 18 (MALHTVLIILSLLPMLEA) form the signal peptide. Pyrrolidone carboxylic acid is present on Q19. N-linked (GlcNAc...) asparagine glycans are attached at residues N25, N34, N76, N94, and N104. A disulfide bridge links C91 with C184.

The protein belongs to the calycin superfamily. Lipocalin family.

It localises to the secreted. In terms of biological role, functions as a transport protein in the blood stream. Binds various ligands in the interior of its beta-barrel domain. Appears to function in modulating the activity of the immune system during the acute-phase reaction. In Mus musculus (Mouse), this protein is Alpha-1-acid glycoprotein 1 (Orm1).